The following is a 55-amino-acid chain: Small integral membrane protein 11 (55 aa).

Residues 9-29 (VPLLLYILAAKTLILCLAFAG) traverse the membrane as a helical segment. The stretch at 34–54 (QRRSLEGKLQAEKRKQSEKKA) forms a coiled coil.

Expressed in brain, heart, kidney, thymus, liver, stomach, muscle, lung, testis, ovary, skin and eye.

It localises to the membrane. The sequence is that of Small integral membrane protein 11 from Mus musculus (Mouse).